The following is a 246-amino-acid chain: Uroporphyrinogen-III synthase (246 aa).

This sequence belongs to the uroporphyrinogen-III synthase family. As to quaternary structure, monomer.

The catalysed reaction is hydroxymethylbilane = uroporphyrinogen III + H2O. It functions in the pathway porphyrin-containing compound metabolism; protoporphyrin-IX biosynthesis; coproporphyrinogen-III from 5-aminolevulinate: step 3/4. Catalyzes cyclization of the linear tetrapyrrole, hydroxymethylbilane, to the macrocyclic uroporphyrinogen III. This is Uroporphyrinogen-III synthase (hemD) from Salmonella typhimurium (strain LT2 / SGSC1412 / ATCC 700720).